A 315-amino-acid polypeptide reads, in one-letter code: ADP/ATP translocase 4 (315 aa).

Over 1 to 19 (MHREPPKKKAEKRLFDASS) the chain is Mitochondrial intermembrane. The Solcar 1 repeat unit spans residues 18–110 (SSFGKDLLAG…FAFKDKYKQL (93 aa)). The helical transmembrane segment at 20 to 49 (FGKDLLAGGVAAAVSKTAVAPIERVKLLLQ) threads the bilayer. At 50-86 (VQASSKQISPEARYKGMVDCLVRIPREQGFFSFWRGN) the chain is on the mitochondrial matrix side. A helical transmembrane segment spans residues 87-111 (LANVIRYFPTQALNFAFKDKYKQLF). ADP contacts are provided by R92 and K104. At 112–121 (MSGVNKEKQF) the chain is on the mitochondrial intermembrane side. Residues 122-142 (WRWFLANLASGGAAGATSLCV) traverse the membrane as a helical segment. 2 Solcar repeats span residues 123–213 (RWFL…VKGL) and 220–307 (TPFL…IKEF). Residues 143–190 (VYPLDFARTRLGVDIGKGPEERQFKGLGDCIMKIAKSDGIAGLYQGFG) are Mitochondrial matrix-facing. Residues 191–211 (VSVQGIIVYRASYFGAYDTVK) form a helical membrane-spanning segment. Over 212–222 (GLLPKPKKTPF) the chain is Mitochondrial intermembrane. Residues 223–243 (LVSFFIAQVVTTCSGILSYPF) traverse the membrane as a helical segment. Residues 244–283 (DTVRRRMMMQSGEAKRQYKGTLDCFVKIYQHEGINSFFRG) are Mitochondrial matrix-facing. R247 contacts ADP. Residues 247-252 (RRRMMM) are important for transport activity. The Nucleotide carrier signature motif motif lies at 247-252 (RRRMMM). Residues 284–301 (AFSNVLRGTGGALVLVLY) traverse the membrane as a helical segment. The Mitochondrial intermembrane portion of the chain corresponds to 302–315 (DKIKEFFHIDIGGR).

It belongs to the mitochondrial carrier (TC 2.A.29) family. As to quaternary structure, monomer.

It is found in the mitochondrion inner membrane. The protein localises to the membrane. It localises to the cell projection. Its subcellular location is the cilium. The protein resides in the flagellum membrane. It catalyses the reaction ADP(in) + ATP(out) = ADP(out) + ATP(in). The enzyme catalyses dATP(out) + ADP(in) = dATP(in) + ADP(out). It carries out the reaction dADP(in) + ADP(out) = dADP(out) + ADP(in). The catalysed reaction is H(+)(in) = H(+)(out). Its activity is regulated as follows. The matrix-open state (m-state) is inhibited by the membrane-permeable bongkrekic acid (BKA). The cytoplasmic-open state (c-state) is inhibited by the membrane-impermeable toxic inhibitor carboxyatractyloside (CATR). Proton transporter activity is inhibited by ADP:ATP antiporter activity. ADP:ATP antiporter that mediates import of ADP into the mitochondrial matrix for ATP synthesis, and export of ATP out to fuel the cell. Cycles between the cytoplasmic-open state (c-state) and the matrix-open state (m-state): operates by the alternating access mechanism with a single substrate-binding site intermittently exposed to either the cytosolic (c-state) or matrix (m-state) side of the inner mitochondrial membrane. Specifically required during spermatogenesis, probably to mediate ADP:ATP exchange in spermatocytes. Large ATP supplies from mitochondria may be critical for normal progression of spermatogenesis during early stages of meiotic prophase I, including DNA double-strand break repair and chromosomal synapsis. In addition to its ADP:ATP antiporter activity, also involved in mitochondrial uncoupling and mitochondrial permeability transition pore (mPTP) activity. Plays a role in mitochondrial uncoupling by acting as a proton transporter: proton transport uncouples the proton flows via the electron transport chain and ATP synthase to reduce the efficiency of ATP production and cause mitochondrial thermogenesis. Proton transporter activity is inhibited by ADP:ATP antiporter activity, suggesting that SLC25A31/ANT4 acts as a master regulator of mitochondrial energy output by maintaining a delicate balance between ATP production (ADP:ATP antiporter activity) and thermogenesis (proton transporter activity). Proton transporter activity requires free fatty acids as cofactor, but does not transport it. Among nucleotides, may also exchange ADP for dATP and dADP. Also plays a key role in mPTP opening, a non-specific pore that enables free passage of the mitochondrial membranes to solutes of up to 1.5 kDa, and which contributes to cell death. It is however unclear if SLC25A31/ANT4 constitutes a pore-forming component of mPTP or regulates it. The chain is ADP/ATP translocase 4 from Macaca fascicularis (Crab-eating macaque).